Reading from the N-terminus, the 267-residue chain is MTKVALLIAYQGTAYSGWQQQPNDLSIQEVIESSLKKITKTRTPLIASGRTDAGVHAYGQVAHFRAPDHPLFANANLTKKALNAILPKDIVIRDVALFDDNFHARYLTIAKEYRYSLSRLAKPLPWQRHFCYTPRHPFSTELMQEGANLLIGTHDFASFANHGRDYNSTVRTIYTLDIVDKGDSLSIICRGNGFLYKMVRNLVGALLDVGKGAYPPEHLLDILEQKNRREGPSAAPAYGLSLHHVCYSSPYNNFCCEQCSVSTSNEG.

Asp52 (nucleophile) is an active-site residue. Position 113 (Tyr113) interacts with substrate.

This sequence belongs to the tRNA pseudouridine synthase TruA family. In terms of assembly, homodimer.

The catalysed reaction is uridine(38/39/40) in tRNA = pseudouridine(38/39/40) in tRNA. Its function is as follows. Formation of pseudouridine at positions 38, 39 and 40 in the anticodon stem and loop of transfer RNAs. This is tRNA pseudouridine synthase A from Chlamydia pneumoniae (Chlamydophila pneumoniae).